Consider the following 404-residue polypeptide: Cysteine desulfurase IscS (404 aa).

Pyridoxal 5'-phosphate is bound by residues 75-76, Asn155, Gln183, and 203-205; these read AT and SAH. Residue Lys206 is modified to N6-(pyridoxal phosphate)lysine. Residue Thr243 participates in pyridoxal 5'-phosphate binding. The active-site Cysteine persulfide intermediate is Cys328. Cys328 is a binding site for [2Fe-2S] cluster.

Belongs to the class-V pyridoxal-phosphate-dependent aminotransferase family. NifS/IscS subfamily. Homodimer. Forms a heterotetramer with IscU, interacts with other sulfur acceptors. It depends on pyridoxal 5'-phosphate as a cofactor.

It localises to the cytoplasm. It carries out the reaction (sulfur carrier)-H + L-cysteine = (sulfur carrier)-SH + L-alanine. Its pathway is cofactor biosynthesis; iron-sulfur cluster biosynthesis. Its function is as follows. Master enzyme that delivers sulfur to a number of partners involved in Fe-S cluster assembly, tRNA modification or cofactor biosynthesis. Catalyzes the removal of elemental sulfur atoms from cysteine to produce alanine. Functions as a sulfur delivery protein for Fe-S cluster synthesis onto IscU, an Fe-S scaffold assembly protein, as well as other S acceptor proteins. In Vibrio campbellii (strain ATCC BAA-1116), this protein is Cysteine desulfurase IscS.